The chain runs to 102 residues: Phosphoribosyl-ATP pyrophosphatase (102 aa).

The protein belongs to the PRA-PH family.

Its subcellular location is the cytoplasm. The catalysed reaction is 1-(5-phospho-beta-D-ribosyl)-ATP + H2O = 1-(5-phospho-beta-D-ribosyl)-5'-AMP + diphosphate + H(+). Its pathway is amino-acid biosynthesis; L-histidine biosynthesis; L-histidine from 5-phospho-alpha-D-ribose 1-diphosphate: step 2/9. In Dinoroseobacter shibae (strain DSM 16493 / NCIMB 14021 / DFL 12), this protein is Phosphoribosyl-ATP pyrophosphatase.